The primary structure comprises 130 residues: Phosphoribosyl-AMP cyclohydrolase (130 aa).

A Mg(2+)-binding site is contributed by Asp80. Cys81 provides a ligand contact to Zn(2+). Residues Asp82 and Asp84 each coordinate Mg(2+). Zn(2+) is bound by residues Cys98 and Cys105.

The protein belongs to the PRA-CH family. As to quaternary structure, homodimer. Mg(2+) is required as a cofactor. Requires Zn(2+) as cofactor.

The protein resides in the cytoplasm. The catalysed reaction is 1-(5-phospho-beta-D-ribosyl)-5'-AMP + H2O = 1-(5-phospho-beta-D-ribosyl)-5-[(5-phospho-beta-D-ribosylamino)methylideneamino]imidazole-4-carboxamide. Its pathway is amino-acid biosynthesis; L-histidine biosynthesis; L-histidine from 5-phospho-alpha-D-ribose 1-diphosphate: step 3/9. In terms of biological role, catalyzes the hydrolysis of the adenine ring of phosphoribosyl-AMP. This is Phosphoribosyl-AMP cyclohydrolase from Oleidesulfovibrio alaskensis (strain ATCC BAA-1058 / DSM 17464 / G20) (Desulfovibrio alaskensis).